The following is a 334-amino-acid chain: N-acetyl-gamma-glutamyl-phosphate reductase (334 aa).

The active site involves C145. The segment at 173 to 192 (GISGSGQDPTEGTHYPNVTQ) is disordered.

Belongs to the NAGSA dehydrogenase family. Type 1 subfamily.

It is found in the cytoplasm. It catalyses the reaction N-acetyl-L-glutamate 5-semialdehyde + phosphate + NADP(+) = N-acetyl-L-glutamyl 5-phosphate + NADPH + H(+). The protein operates within amino-acid biosynthesis; L-arginine biosynthesis; N(2)-acetyl-L-ornithine from L-glutamate: step 3/4. In terms of biological role, catalyzes the NADPH-dependent reduction of N-acetyl-5-glutamyl phosphate to yield N-acetyl-L-glutamate 5-semialdehyde. The protein is N-acetyl-gamma-glutamyl-phosphate reductase of Methanocella arvoryzae (strain DSM 22066 / NBRC 105507 / MRE50).